Reading from the N-terminus, the 433-residue chain is G2/mitotic-specific cyclin-B1 (433 aa).

The tract at residues 19–47 is disordered; the sequence is INMAGAKRVPTAPAATSKPGLRPRTALGD. Position 73 is an N6-acetyllysine (K73). The segment at 93 to 116 is disordered; that stretch reads PVSEPVPEPEPEPEPEPVKEEKLS. S126 carries the post-translational modification Phosphoserine; by CDK1. S128 carries the phosphoserine modification. S133 bears the Phosphoserine; by PLK1 mark. S147 carries the post-translational modification Phosphoserine. Interaction with CDK2 stretches follow at residues 169–177 and 258–261; these read EYVKDIYAY and YEEM. T321 carries the phosphothreonine modification.

Belongs to the cyclin family. Cyclin AB subfamily. Interacts with the CDC2 protein kinase to form a serine/threonine kinase holoenzyme complex also known as maturation promoting factor (MPF). The cyclin subunit imparts substrate specificity to the complex. Binds HEI10. Interacts with catalytically active RALBP1 and CDC2 during mitosis to form an endocytotic complex during interphase. Interacts with CCNF; interaction is required for nuclear localization. Interacts with CDK5RAP3. Interacts with RFPL4A and UBE2A. Interacts with INCA1. Ubiquitinated by the SCF(NIPA) complex during interphase, leading to its destruction. Deubiquitinated by USP22 during G2/M phase. Post-translationally, phosphorylated by PLK1 at Ser-133 on centrosomes during prophase: phosphorylation by PLK1 does not cause nuclear import. Phosphorylation at Ser-147 was also reported to be mediated by PLK1 but Ser-133 seems to be the primary phosphorylation site.

Its subcellular location is the cytoplasm. The protein resides in the nucleus. It is found in the cytoskeleton. The protein localises to the microtubule organizing center. It localises to the centrosome. In terms of biological role, essential for the control of the cell cycle at the G2/M (mitosis) transition. In Homo sapiens (Human), this protein is G2/mitotic-specific cyclin-B1 (CCNB1).